The following is a 77-amino-acid chain: Teretoxin Tsu15.4 (77 aa).

A signal peptide spans 1–21 (MTKLTVLLLAILVLLPLATSN). Residues 22–40 (SAADEALASLSGLLRRAKR) constitute a propeptide that is removed on maturation.

Contains 4 disulfide bonds. Expressed by the venom duct.

It localises to the secreted. The protein is Teretoxin Tsu15.4 of Terebra subulata (Chocolate spotted auger).